A 140-amino-acid polypeptide reads, in one-letter code: Peptidyl-prolyl cis-trans isomerase FKBP2 (140 aa).

Positions 1–22 (MRLSWILTILSICLSALAAATG) are cleaved as a signal peptide. Positions 47–135 (GDVLHMHYTG…VFEVELLKIE (89 aa)) constitute a PPIase FKBP-type domain. The short motif at 137–140 (RSEL) is the Prevents secretion from ER element.

The protein belongs to the FKBP-type PPIase family. FKBP2 subfamily. Interacts with ARFGEF1/BIG1 and the C-terminal of EPB41L2.

The protein resides in the endoplasmic reticulum membrane. The enzyme catalyses [protein]-peptidylproline (omega=180) = [protein]-peptidylproline (omega=0). Its activity is regulated as follows. Inhibited by both FK506 and rapamycin. Functionally, PPIases accelerate the folding of proteins. It catalyzes the cis-trans isomerization of proline imidic peptide bonds in oligopeptides. The chain is Peptidyl-prolyl cis-trans isomerase FKBP2 (Fkbp2) from Mus musculus (Mouse).